The primary structure comprises 116 residues: Transcriptional regulator WhiB4 (116 aa).

The region spanning 36–92 is the 4Fe-4S Wbl-type domain; the sequence is LCRATDPDELFVRGAAQRKAAVICRHCPVMQECGADALDNKVEFGVWGGMTERQRRA. The [4Fe-4S] cluster site is built by Cys37, Cys59, Cys62, and Cys68.

It belongs to the WhiB family. The cofactor is [4Fe-4S] cluster. Post-translationally, the Fe-S cluster can be nitrosylated by nitric oxide (NO). Upon Fe-S cluster removal intramolecular disulfide bonds are formed.

The protein resides in the cytoplasm. Functionally, acts as a transcriptional regulator. Probably redox-responsive. The apo- but not holo-form probably binds DNA. Plays a role in lipooligosaccharide (LOS) biosynthesis by regulating LOS gene expression. The protein is Transcriptional regulator WhiB4 (whiB4) of Mycobacterium marinum (strain ATCC BAA-535 / M).